The primary structure comprises 487 residues: N-succinylglutamate 5-semialdehyde dehydrogenase (487 aa).

221–226 (GSSRTG) contacts NAD(+). Residues glutamate 244 and cysteine 278 contribute to the active site.

Belongs to the aldehyde dehydrogenase family. AstD subfamily.

The enzyme catalyses N-succinyl-L-glutamate 5-semialdehyde + NAD(+) + H2O = N-succinyl-L-glutamate + NADH + 2 H(+). Its pathway is amino-acid degradation; L-arginine degradation via AST pathway; L-glutamate and succinate from L-arginine: step 4/5. In terms of biological role, catalyzes the NAD-dependent reduction of succinylglutamate semialdehyde into succinylglutamate. In Pseudomonas entomophila (strain L48), this protein is N-succinylglutamate 5-semialdehyde dehydrogenase.